The primary structure comprises 135 residues: METTLAIVKPDGVKRGLIGEILKRYENKGLRLKAAKVITPTIELLEKHYEEHKGKPYYKPLIQYMSSGPVFAMVLEGENAVKIVRLLNGATKVEEALPGTIRGDFAISTTFNIIHGSDSIESAKREIALWFPELA.

ATP-binding residues include lysine 9, tyrosine 57, arginine 85, threonine 91, arginine 102, and asparagine 112. The active-site Pros-phosphohistidine intermediate is the histidine 115.

Belongs to the NDK family. As to quaternary structure, homotetramer. The cofactor is Mg(2+).

The protein localises to the cytoplasm. The catalysed reaction is a 2'-deoxyribonucleoside 5'-diphosphate + ATP = a 2'-deoxyribonucleoside 5'-triphosphate + ADP. The enzyme catalyses a ribonucleoside 5'-diphosphate + ATP = a ribonucleoside 5'-triphosphate + ADP. In terms of biological role, major role in the synthesis of nucleoside triphosphates other than ATP. The ATP gamma phosphate is transferred to the NDP beta phosphate via a ping-pong mechanism, using a phosphorylated active-site intermediate. The polypeptide is Nucleoside diphosphate kinase (Thermoanaerobacter pseudethanolicus (strain ATCC 33223 / 39E) (Clostridium thermohydrosulfuricum)).